A 48-amino-acid polypeptide reads, in one-letter code: ATP synthase protein 8 (48 aa).

The chain crosses the membrane as a helical span at residues 4–24 (LVPFFFVNQVVFAFIVLTVLI).

It belongs to the ATPase protein 8 family. As to quaternary structure, F-type ATPases have 2 components, CF(1) - the catalytic core - and CF(0) - the membrane proton channel.

The protein resides in the mitochondrion membrane. Its function is as follows. Mitochondrial membrane ATP synthase (F(1)F(0) ATP synthase or Complex V) produces ATP from ADP in the presence of a proton gradient across the membrane which is generated by electron transport complexes of the respiratory chain. F-type ATPases consist of two structural domains, F(1) - containing the extramembraneous catalytic core and F(0) - containing the membrane proton channel, linked together by a central stalk and a peripheral stalk. During catalysis, ATP synthesis in the catalytic domain of F(1) is coupled via a rotary mechanism of the central stalk subunits to proton translocation. Part of the complex F(0) domain. Minor subunit located with subunit a in the membrane. The chain is ATP synthase protein 8 (atp8) from Emericella nidulans (Aspergillus nidulans).